Reading from the N-terminus, the 438-residue chain is tRNA-2-methylthio-N(6)-dimethylallyladenosine synthase (438 aa).

The MTTase N-terminal domain occupies 2 to 118 (KSFYLETFGC…LADMVRDAEL (117 aa)). 6 residues coordinate [4Fe-4S] cluster: Cys-11, Cys-47, Cys-81, Cys-157, Cys-161, and Cys-164. The region spanning 143–373 (PSAEVSRFVT…LALQEEITRQ (231 aa)) is the Radical SAM core domain. Positions 376 to 438 (QMDIGQVLPV…YRNSHLGERV (63 aa)) constitute a TRAM domain.

This sequence belongs to the methylthiotransferase family. MiaB subfamily. As to quaternary structure, monomer. The cofactor is [4Fe-4S] cluster.

The protein localises to the cytoplasm. It carries out the reaction N(6)-dimethylallyladenosine(37) in tRNA + (sulfur carrier)-SH + AH2 + 2 S-adenosyl-L-methionine = 2-methylsulfanyl-N(6)-dimethylallyladenosine(37) in tRNA + (sulfur carrier)-H + 5'-deoxyadenosine + L-methionine + A + S-adenosyl-L-homocysteine + 2 H(+). Its function is as follows. Catalyzes the methylthiolation of N6-(dimethylallyl)adenosine (i(6)A), leading to the formation of 2-methylthio-N6-(dimethylallyl)adenosine (ms(2)i(6)A) at position 37 in tRNAs that read codons beginning with uridine. This chain is tRNA-2-methylthio-N(6)-dimethylallyladenosine synthase, found in Syntrophotalea carbinolica (strain DSM 2380 / NBRC 103641 / GraBd1) (Pelobacter carbinolicus).